A 202-amino-acid polypeptide reads, in one-letter code: Sterile alpha motif domain-containing protein 10 (202 aa).

Residues methionine 1–glycine 22 form a disordered region. Positions tryptophan 118–arginine 184 constitute an SAM domain.

The sequence is that of Sterile alpha motif domain-containing protein 10 from Mus musculus (Mouse).